We begin with the raw amino-acid sequence, 20 residues long: Non-specific lipid-transfer protein (20 aa).

Belongs to the plant LTP family.

In terms of biological role, plant non-specific lipid-transfer proteins transfer phospholipids as well as galactolipids across membranes. May play a role in wax or cutin deposition in the cell walls of expanding epidermal cells and certain secretory tissues. This Citrus limon (Lemon) protein is Non-specific lipid-transfer protein.